The following is a 222-amino-acid chain: Oligoribonuclease (222 aa).

The interval 19–38 is disordered; sequence PMASSSSTGKQEESVNGSLE. Residues 21–35 are compositionally biased toward polar residues; the sequence is ASSSSTGKQEESVNG. The Exonuclease domain occupies 46–210; it reads LVWIDLEMTG…DDIRESIKEL (165 aa). H167 is a catalytic residue.

It belongs to the oligoribonuclease family.

Functionally, 3'-to-5' exoribonuclease specific for small oligoribonucleotides. The sequence is that of Oligoribonuclease from Arabidopsis thaliana (Mouse-ear cress).